The sequence spans 885 residues: DDT domain-containing protein DDB_G0282237 (885 aa).

One can recognise a WAC domain in the interval 20-125 (EEYFVIKFTK…GEIVSFKKAN (106 aa)). 3 disordered regions span residues 141–184 (ESDE…INAL), 201–264 (DDEN…SVRK), and 367–431 (LEDT…KENE). Residues 154 to 180 (SSSSSSTTTTTTTPTTPPTTTTTTSSS) show a composition bias toward low complexity. The segment covering 210-264 (KNNGDTSSDKKGEKEKEKEKEKEKEKEKEKEKEKEKEKEKEKEKEKDSDTKSVRK) has biased composition (basic and acidic residues). The stretch at 217–260 (SDKKGEKEKEKEKEKEKEKEKEKEKEKEKEKEKEKEKEKDSDTK) forms a coiled coil. The span at 367 to 379 (LEDTEEESVDIES) shows a compositional bias: acidic residues. A compositionally biased stretch (low complexity) spans 380 to 396 (NDNSNSNGNSNSNNNLD). The DDT domain occupies 443–503 (SNTFGDFLMV…MKTIFTLPSY (61 aa)). The stretch at 530–565 (FQNEVKRIAIEEKEKQEKLKQLEEQNIRMLNLANEL) forms a coiled coil. 2 disordered regions span residues 562–632 (ANEL…WKEE) and 707–744 (KQDDAAAAAEDDDENNEDDEEQQQQEVKKPKGAKQKKP). Residues 567 to 577 (GSDDEDDEMKL) show a composition bias toward acidic residues. Over residues 578-603 (DEDGNEIKKDVEMKDNDGTKDTKKDD) the composition is skewed to basic and acidic residues. Coiled-coil stretches lie at residues 593–628 (NDGTKDTKKDDEENEEEEEEEEEEEEEVASDEGEEE) and 674–782 (ASEK…RDRN). Acidic residues-rich tracts occupy residues 604 to 631 (EENEEEEEEEEEEEEEVASDEGEEEWKE) and 715 to 729 (AEDDDENNEDDEEQQ).

The protein resides in the nucleus. The polypeptide is DDT domain-containing protein DDB_G0282237 (Dictyostelium discoideum (Social amoeba)).